A 460-amino-acid polypeptide reads, in one-letter code: Cysteine--tRNA ligase (460 aa).

Cys28 provides a ligand contact to Zn(2+). A 'HIGH' region motif is present at residues 30-40 (MTVYDYCHLGH). Residues Cys209, His234, and Glu238 each contribute to the Zn(2+) site. Residues 266–270 (KMSKS) carry the 'KMSKS' region motif. Lys269 contributes to the ATP binding site.

The protein belongs to the class-I aminoacyl-tRNA synthetase family. Monomer. Zn(2+) is required as a cofactor.

It is found in the cytoplasm. It carries out the reaction tRNA(Cys) + L-cysteine + ATP = L-cysteinyl-tRNA(Cys) + AMP + diphosphate. The polypeptide is Cysteine--tRNA ligase (Pseudomonas entomophila (strain L48)).